The chain runs to 364 residues: MAHRFPALTPEQKKELSEIAQRIVANGKGILAADESVGTMGNRLQRIKVENTEENRRQFRELLFSVDNSISQSIGGVILFHETLYQKDSQGNLFRNVLKEKGIVVGIKLDQGGAPLAGTNKETTIQGLDGLSERCAQYKKDGVDFGKWRAVLRIADQCPSSLAIQENANALARYASICQQNGLVPIVEPEVLPDGDHDLEHCQYVSEKVLAAVYKALNDHHVYLEGTLLKPNMVTAGHACTKKYTPEQVAMATVTALHRTVPAAVPGICFLSGGMSEEDATLNLNAINRCPLPRPWKLSFSYGRALQASALAAWGGKAANKKATQEAFMKRAMANCQAAQGQYVHTGSSGAAATQSLFTASYTY.

Position 2 is an N-acetylalanine (A2). K13 carries the post-translational modification N6-succinyllysine. S36 is subject to Phosphoserine. T39 bears the Phosphothreonine mark. R43 contributes to the beta-D-fructose 1,6-bisphosphate binding site. Position 89 is a phosphoserine (S89). T119 bears the Phosphothreonine mark. K121 bears the N6-succinyllysine mark. S132 is modified (phosphoserine). The Proton acceptor role is filled by E188. At S206 the chain carries Phosphoserine. Residue K230 is the Schiff-base intermediate with dihydroxyacetone-P of the active site. Residues S272, S276, S299, and S301 each carry the phosphoserine modification. Residue 272–274 (SGG) participates in beta-D-fructose 1,6-bisphosphate binding. R304 contacts beta-D-fructose 1,6-bisphosphate. Phosphoserine is present on S309. Residue K317 is modified to N6-succinyllysine.

The protein belongs to the class I fructose-bisphosphate aldolase family. In terms of assembly, homotetramer. Interacts with BBS1, BBS2, BBS4 and BBS7. Forms a ternary complex with G6PD and TP53; this interaction is direct.

The protein localises to the cytoplasm. It is found in the cytosol. The protein resides in the cytoskeleton. Its subcellular location is the microtubule organizing center. It localises to the centrosome. The protein localises to the centriolar satellite. The enzyme catalyses beta-D-fructose 1,6-bisphosphate = D-glyceraldehyde 3-phosphate + dihydroxyacetone phosphate. The catalysed reaction is beta-D-fructose 1-phosphate = D-glyceraldehyde + dihydroxyacetone phosphate. It functions in the pathway carbohydrate degradation; glycolysis; D-glyceraldehyde 3-phosphate and glycerone phosphate from D-glucose: step 4/4. It participates in carbohydrate biosynthesis; gluconeogenesis. The protein operates within carbohydrate metabolism; fructose metabolism. In terms of biological role, catalyzes the aldol cleavage of fructose 1,6-biphosphate to form two triosephosphates dihydroxyacetone phosphate and D-glyceraldehyde 3-phosphate in glycolysis as well as the reverse stereospecific aldol addition reaction in gluconeogenesis. In fructolysis, metabolizes fructose 1-phosphate derived from the phosphorylation of dietary fructose by fructokinase into dihydroxyacetone phosphate and D-glyceraldehyde. Acts as an adapter independently of its enzymatic activity, exerts a tumor suppressor role by stabilizing the ternary complex with G6PD and TP53 to inhibit G6PD activity and keep oxidative pentose phosphate metabolism in check. This is Fructose-bisphosphate aldolase B from Mus musculus (Mouse).